Here is a 217-residue protein sequence, read N- to C-terminus: Somatotropin (217 aa).

The signal sequence occupies residues 1–27 (MMAAGPRTSLLLAFTLLCLPWTQVVGA). His-46 lines the Zn(2+) pocket. Residues Cys-79 and Cys-190 are joined by a disulfide bond. Ser-132 is subject to Phosphoserine. Zn(2+) is bound at residue Glu-199. A disulfide bridge connects residues Cys-207 and Cys-215.

The protein belongs to the somatotropin/prolactin family.

It localises to the secreted. Functionally, plays an important role in growth control. Its major role in stimulating body growth is to stimulate the liver and other tissues to secrete IGF1. It stimulates both the differentiation and proliferation of myoblasts. It also stimulates amino acid uptake and protein synthesis in muscle and other tissues. The protein is Somatotropin (GH1) of Capra hircus (Goat).